The primary structure comprises 187 residues: Ribosome-recycling factor (187 aa).

The protein belongs to the RRF family.

The protein resides in the cytoplasm. In terms of biological role, responsible for the release of ribosomes from messenger RNA at the termination of protein biosynthesis. May increase the efficiency of translation by recycling ribosomes from one round of translation to another. This is Ribosome-recycling factor from Xanthobacter autotrophicus (strain ATCC BAA-1158 / Py2).